Reading from the N-terminus, the 280-residue chain is Phosphatidylglycerol--prolipoprotein diacylglyceryl transferase (280 aa).

4 helical membrane passes run 23 to 43 (LRWY…LAGV), 58 to 78 (LLFW…VLFY), 93 to 113 (IWTG…ALWW), and 120 to 140 (CTFL…LGAG). Arg-141 is a binding site for a 1,2-diacyl-sn-glycero-3-phospho-(1'-sn-glycerol). A run of 3 helical transmembrane segments spans residues 173–193 (PSQL…LWLY), 200–220 (IGAV…FVEF), and 241–261 (QGQI…VWAV).

This sequence belongs to the Lgt family.

It localises to the cell inner membrane. It catalyses the reaction L-cysteinyl-[prolipoprotein] + a 1,2-diacyl-sn-glycero-3-phospho-(1'-sn-glycerol) = an S-1,2-diacyl-sn-glyceryl-L-cysteinyl-[prolipoprotein] + sn-glycerol 1-phosphate + H(+). The protein operates within protein modification; lipoprotein biosynthesis (diacylglyceryl transfer). Catalyzes the transfer of the diacylglyceryl group from phosphatidylglycerol to the sulfhydryl group of the N-terminal cysteine of a prolipoprotein, the first step in the formation of mature lipoproteins. The polypeptide is Phosphatidylglycerol--prolipoprotein diacylglyceryl transferase (Pseudoalteromonas atlantica (strain T6c / ATCC BAA-1087)).